A 228-amino-acid polypeptide reads, in one-letter code: 2,3-bisphosphoglycerate-dependent phosphoglycerate mutase (228 aa).

Substrate contacts are provided by residues 8–15, 21–22, arginine 60, 87–90, lysine 98, 114–115, and 183–184; these read RHGQSVWN, TG, ERHY, RR, and GN. The active-site Tele-phosphohistidine intermediate is histidine 9. Glutamate 87 serves as the catalytic Proton donor/acceptor.

Belongs to the phosphoglycerate mutase family. BPG-dependent PGAM subfamily. Homodimer.

The enzyme catalyses (2R)-2-phosphoglycerate = (2R)-3-phosphoglycerate. It functions in the pathway carbohydrate degradation; glycolysis; pyruvate from D-glyceraldehyde 3-phosphate: step 3/5. Its function is as follows. Catalyzes the interconversion of 2-phosphoglycerate and 3-phosphoglycerate. This is 2,3-bisphosphoglycerate-dependent phosphoglycerate mutase from Rhodospirillum centenum (strain ATCC 51521 / SW).